Consider the following 95-residue polypeptide: Defensin (95 aa).

Residues 1–17 form the signal peptide; the sequence is MKNYVFALLVVTAVAIA. The propeptide occupies 18–55; the sequence is LPNEDKNAPMRVHLLPQKEDESLKLEVTPVKEHHRTRR. 3 disulfides stabilise this stretch: C58/C85, C71/C91, and C75/C93.

Belongs to the invertebrate defensin family. Type 1 subfamily.

The protein localises to the secreted. In terms of biological role, antibacterial peptide mostly active against Gram-positive bacteria. This chain is Defensin, found in Formica aquilonia (Red wood ant).